Here is a 2179-residue protein sequence, read N- to C-terminus: Genome polyprotein (2179 aa).

The disordered stretch occupies residues 1–20 (MGAQVSTQKSGSHENQNILT). Gly-2 is lipidated: N-myristoyl glycine; by host. At 2–1491 (GAQVSTQKSG…AMNQASMIIN (1490 aa)) the chain is on the cytoplasmic side. An amphipathic alpha-helix region spans residues 564 to 584 (ALTEGLGDELEEVIVEKTKQT). Catalysis depends on for protease 2A activity residues His-876 and Asp-894. Zn(2+) is bound by residues Cys-911 and Cys-913. The For protease 2A activity role is filled by Cys-965. Cys-971 and His-973 together coordinate Zn(2+). The membrane-binding stretch occupies residues 1101 to 1173 (NDGWFRKFND…HISNPTQEKR (73 aa)). The tract at residues 1101 to 1239 (NDGWFRKFND…TPGSGKSLTT (139 aa)) is oligomerization. The segment at 1122-1126 (ANKIS) is RNA-binding. An SF3 helicase domain is found at 1205–1361 (KNKMVNYMQF…TTYTKNGKLN (157 aa)). Zn(2+) is bound by residues Cys-1369, Cys-1372, Cys-1381, and Cys-1386. The C4-type zinc-finger motif lies at 1369-1386 (CKDCHQPSNFKKCCPLVC). Residues 1413–1420 (DFKSKMQI) form an RNA-binding region. The interval 1424-1429 (LETLFQ) is oligomerization. The stretch at 1492–1507 (TILMFVSTLGIVYVIY) is an intramembrane region. The Cytoplasmic segment spans residues 1508–2179 (KLFAQTQGPY…VLRRRWLDLF (672 aa)). Residue Tyr-1517 is modified to O-(5'-phospho-RNA)-tyrosine. Positions 1538-1715 (GPNTEFALSL…FSAQLKKQYF (178 aa)) constitute a Peptidase C3 domain. Active-site for protease 3C activity residues include His-1577, Glu-1608, and Cys-1683. Residues 1946-2060 (GHLMAFDYSN…SYPYELDPQV (115 aa)) enclose the RdRp catalytic domain. Residues Asp-1952 and Asp-2046 each coordinate Mg(2+).

Belongs to the picornaviruses polyprotein family. As to quaternary structure, interacts with capsid protein VP1 and capsid protein VP3 to form heterotrimeric protomers. Interacts with capsid protein VP0, and capsid protein VP3 to form heterotrimeric protomers. Five protomers subsequently associate to form pentamers which serve as building blocks for the capsid. Interacts with capsid protein VP2, capsid protein VP3 and capsid protein VP4 following cleavage of capsid protein VP0. Interacts with host ICAM1. In terms of assembly, interacts with capsid protein VP1 and capsid protein VP3 in the mature capsid. As to quaternary structure, interacts with capsid protein VP0 and capsid protein VP1 to form heterotrimeric protomers. Five protomers subsequently associate to form pentamers which serve as building blocks for the capsid. Interacts with capsid protein VP4 in the mature capsid. Interacts with protein 2C; this interaction may be important for virion morphogenesis. Interacts with capsid protein VP1 and capsid protein VP3. In terms of assembly, homodimer. As to quaternary structure, homohexamer; forms a hexameric ring structure with 6-fold symmetry characteristic of AAA+ ATPases. Interacts (via N-terminus) with host RTN3 (via reticulon domain); this interaction is important for viral replication. Interacts with capsid protein VP3; this interaction may be important for virion morphogenesis. Interacts with protein 3CD. In terms of assembly, homodimer. Interacts with host GBF1. Interacts (via GOLD domain) with host ACBD3 (via GOLD domain); this interaction allows the formation of a viral protein 3A/ACBD3 heterotetramer with a 2:2 stoichiometry, which will stimulate the recruitment of host PI4KB in order to synthesize PI4P at the viral RNA replication sites. As to quaternary structure, interacts with RNA-directed RNA polymerase. Interacts with protein 3AB and with RNA-directed RNA polymerase. In terms of assembly, interacts with Viral protein genome-linked and with protein 3CD. It depends on Mg(2+) as a cofactor. Specific enzymatic cleavages in vivo by the viral proteases yield processing intermediates and the mature proteins. Post-translationally, myristoylation is required for the formation of pentamers during virus assembly. Further assembly of 12 pentamers and a molecule of genomic RNA generates the provirion. In terms of processing, during virion maturation, immature virions are rendered infectious following cleavage of VP0 into VP4 and VP2. This maturation seems to be an autocatalytic event triggered by the presence of RNA in the capsid and it is followed by a conformational change infectious virion. Myristoylation is required during RNA encapsidation and formation of the mature virus particle. Post-translationally, VPg is uridylylated by the polymerase into VPg-pUpU. This acts as a nucleotide-peptide primer for the genomic RNA replication.

The protein localises to the virion. It is found in the host cytoplasm. Its subcellular location is the host cytoplasmic vesicle membrane. The protein resides in the host nucleus. It catalyses the reaction a ribonucleoside 5'-triphosphate + H2O = a ribonucleoside 5'-diphosphate + phosphate + H(+). The catalysed reaction is Selective cleavage of Tyr-|-Gly bond in the picornavirus polyprotein.. The enzyme catalyses RNA(n) + a ribonucleoside 5'-triphosphate = RNA(n+1) + diphosphate. It carries out the reaction Selective cleavage of Gln-|-Gly bond in the poliovirus polyprotein. In other picornavirus reactions Glu may be substituted for Gln, and Ser or Thr for Gly.. With respect to regulation, replication or transcription is subject to high level of random mutations by the nucleotide analog ribavirin. Functionally, forms an icosahedral capsid of pseudo T=3 symmetry with capsid proteins VP2 and VP3. The capsid is 300 Angstroms in diameter, composed of 60 copies of each capsid protein and enclosing the viral positive strand RNA genome. Capsid protein VP1 mainly forms the vertices of the capsid. Capsid protein VP1 interacts with host ICAM1 to provide virion attachment to target host cells. This attachment induces virion internalization. Tyrosine kinases are probably involved in the entry process. After binding to its receptor, the capsid undergoes conformational changes. Capsid protein VP1 N-terminus (that contains an amphipathic alpha-helix) and capsid protein VP4 are externalized. Together, they shape a pore in the host membrane through which viral genome is translocated to host cell cytoplasm. After genome has been released, the channel shrinks. Forms an icosahedral capsid of pseudo T=3 symmetry with capsid proteins VP2 and VP3. The capsid is 300 Angstroms in diameter, composed of 60 copies of each capsid protein and enclosing the viral positive strand RNA genome. Its function is as follows. Lies on the inner surface of the capsid shell. After binding to the host receptor, the capsid undergoes conformational changes. Capsid protein VP4 is released, Capsid protein VP1 N-terminus is externalized, and together, they shape a pore in the host membrane through which the viral genome is translocated into the host cell cytoplasm. In terms of biological role, component of immature procapsids, which is cleaved into capsid proteins VP4 and VP2 after maturation. Allows the capsid to remain inactive before the maturation step. Functionally, cysteine protease that cleaves viral polyprotein and specific host proteins. It is responsible for the autocatalytic cleavage between the P1 and P2 regions, which is the first cleavage occurring in the polyprotein. Also cleaves the host translation initiation factor EIF4G1, in order to shut down the capped cellular mRNA translation. Inhibits the host nucleus-cytoplasm protein and RNA trafficking by cleaving host members of the nuclear pores including NUP62 and NUP153. Counteracts stress granule formation probably by antagonizing its assembly or promoting its dissassembly. Plays an essential role in the virus replication cycle by acting as a viroporin. Creates a pore in the host endoplasmic reticulum and as a consequence releases Ca2+ in the cytoplasm of infected cell. In turn, high levels of cytoplasmic calcium may trigger membrane trafficking and transport of viral ER-associated proteins to viroplasms, sites of viral genome replication. Its function is as follows. Induces and associates with structural rearrangements of intracellular membranes. Displays RNA-binding, nucleotide binding and NTPase activities. May play a role in virion morphogenesis and viral RNA encapsidation by interacting with the capsid protein VP3. In terms of biological role, localizes the viral replication complex to the surface of membranous vesicles. Together with protein 3CD binds the Cis-Active RNA Element (CRE) which is involved in RNA synthesis initiation. Acts as a cofactor to stimulate the activity of 3D polymerase, maybe through a nucleid acid chaperone activity. Functionally, localizes the viral replication complex to the surface of membranous vesicles. It inhibits host cell endoplasmic reticulum-to-Golgi apparatus transport and causes the disassembly of the Golgi complex, possibly through GBF1 interaction. This would result in depletion of MHC, trail receptors and IFN receptors at the host cell surface. Plays an essential role in viral RNA replication by recruiting ACBD3 and PI4KB at the viral replication sites, thereby allowing the formation of the rearranged membranous structures where viral replication takes place. Acts as a primer for viral RNA replication and remains covalently bound to viral genomic RNA. VPg is uridylylated prior to priming replication into VPg-pUpU. The oriI viral genomic sequence may act as a template for this. The VPg-pUpU is then used as primer on the genomic RNA poly(A) by the RNA-dependent RNA polymerase to replicate the viral genome. During genome replication, the VPg-RNA linkage is removed by the host TDP2, thereby accelerating replication. During the late stage of the replication cycle, host TDP2 is excluded from sites of viral RNA synthesis and encapsidation, allowing for the generation of progeny virions. Its function is as follows. Involved in the viral replication complex and viral polypeptide maturation. It exhibits protease activity with a specificity and catalytic efficiency that is different from protease 3C. Protein 3CD lacks polymerase activity. Protein 3CD binds to the 5'UTR of the viral genome. In terms of biological role, major viral protease that mediates proteolytic processing of the polyprotein. Cleaves host EIF5B, contributing to host translation shutoff. Cleaves also host PABPC1, contributing to host translation shutoff. Cleaves host NLRP1, triggers host N-glycine-mediated degradation of the autoinhibitory NLRP1 N-terminal fragment. Functionally, replicates the viral genomic RNA on the surface of intracellular membranes. May form linear arrays of subunits that propagate along a strong head-to-tail interaction called interface-I. Covalently attaches UMP to a tyrosine of VPg, which is used to prime RNA synthesis. The positive stranded RNA genome is first replicated at virus induced membranous vesicles, creating a dsRNA genomic replication form. This dsRNA is then used as template to synthesize positive stranded RNA genomes. ss(+)RNA genomes are either translated, replicated or encapsidated. This Homo sapiens (Human) protein is Genome polyprotein.